A 333-amino-acid chain; its full sequence is Holliday junction branch migration complex subunit RuvB (333 aa).

Residues 1-181 (MTRILDNDLI…FGITGHMEYY (181 aa)) form a large ATPase domain (RuvB-L) region. Residues leucine 20, arginine 21, glycine 62, lysine 65, threonine 66, threonine 67, 128 to 130 (EDF), arginine 171, tyrosine 181, and arginine 218 contribute to the ATP site. Threonine 66 serves as a coordination point for Mg(2+). Residues 182-252 (QTADLTEIVE…ITDKALTMLD (71 aa)) are small ATPAse domain (RuvB-S). The head domain (RuvB-H) stretch occupies residues 255-333 (QEGLDYVDQK…HLGYPYEKKH (79 aa)). The DNA site is built by arginine 291, arginine 310, arginine 312, and arginine 315.

The protein belongs to the RuvB family. In terms of assembly, homohexamer. Forms an RuvA(8)-RuvB(12)-Holliday junction (HJ) complex. HJ DNA is sandwiched between 2 RuvA tetramers; dsDNA enters through RuvA and exits via RuvB. An RuvB hexamer assembles on each DNA strand where it exits the tetramer. Each RuvB hexamer is contacted by two RuvA subunits (via domain III) on 2 adjacent RuvB subunits; this complex drives branch migration. In the full resolvosome a probable DNA-RuvA(4)-RuvB(12)-RuvC(2) complex forms which resolves the HJ.

It is found in the cytoplasm. It catalyses the reaction ATP + H2O = ADP + phosphate + H(+). Functionally, the RuvA-RuvB-RuvC complex processes Holliday junction (HJ) DNA during genetic recombination and DNA repair, while the RuvA-RuvB complex plays an important role in the rescue of blocked DNA replication forks via replication fork reversal (RFR). RuvA specifically binds to HJ cruciform DNA, conferring on it an open structure. The RuvB hexamer acts as an ATP-dependent pump, pulling dsDNA into and through the RuvAB complex. RuvB forms 2 homohexamers on either side of HJ DNA bound by 1 or 2 RuvA tetramers; 4 subunits per hexamer contact DNA at a time. Coordinated motions by a converter formed by DNA-disengaged RuvB subunits stimulates ATP hydrolysis and nucleotide exchange. Immobilization of the converter enables RuvB to convert the ATP-contained energy into a lever motion, pulling 2 nucleotides of DNA out of the RuvA tetramer per ATP hydrolyzed, thus driving DNA branch migration. The RuvB motors rotate together with the DNA substrate, which together with the progressing nucleotide cycle form the mechanistic basis for DNA recombination by continuous HJ branch migration. Branch migration allows RuvC to scan DNA until it finds its consensus sequence, where it cleaves and resolves cruciform DNA. This is Holliday junction branch migration complex subunit RuvB from Streptococcus equi subsp. zooepidemicus (strain MGCS10565).